A 123-amino-acid polypeptide reads, in one-letter code: MPTINQLIAKGREPNKARNKVPALQGCPQKRGVCTRVYTTTPKKPNSALRKVAKVRLTNGYEVVSYIPGEGHNLQEHSVVLIRGGRVKDLPGVRYHILRGVLDTQGIAKRRQRRSLYGAKRPK.

Aspartate 89 bears the 3-methylthioaspartic acid mark.

This sequence belongs to the universal ribosomal protein uS12 family. Part of the 30S ribosomal subunit. Contacts proteins S8 and S17. May interact with IF1 in the 30S initiation complex.

Functionally, with S4 and S5 plays an important role in translational accuracy. Its function is as follows. Interacts with and stabilizes bases of the 16S rRNA that are involved in tRNA selection in the A site and with the mRNA backbone. Located at the interface of the 30S and 50S subunits, it traverses the body of the 30S subunit contacting proteins on the other side and probably holding the rRNA structure together. The combined cluster of proteins S8, S12 and S17 appears to hold together the shoulder and platform of the 30S subunit. This is Small ribosomal subunit protein uS12 from Granulibacter bethesdensis (strain ATCC BAA-1260 / CGDNIH1).